The primary structure comprises 163 residues: 3-hydroxyacyl-[acyl-carrier-protein] dehydratase FabZ (163 aa).

H58 is a catalytic residue.

This sequence belongs to the thioester dehydratase family. FabZ subfamily.

Its subcellular location is the cytoplasm. The enzyme catalyses a (3R)-hydroxyacyl-[ACP] = a (2E)-enoyl-[ACP] + H2O. Functionally, involved in unsaturated fatty acids biosynthesis. Catalyzes the dehydration of short chain beta-hydroxyacyl-ACPs and long chain saturated and unsaturated beta-hydroxyacyl-ACPs. This is 3-hydroxyacyl-[acyl-carrier-protein] dehydratase FabZ from Francisella tularensis subsp. tularensis (strain FSC 198).